Consider the following 93-residue polypeptide: MEQGKGAINTMDDILNVFNEFIAEFESYNDMVKVKSVPPPTPPKPVKKTPSPTLPKPSKQKQEPQVEVNEDRESVSNLLKKFKDSPLILCGHS.

The disordered stretch occupies residues 35-72; that stretch reads KSVPPPTPPKPVKKTPSPTLPKPSKQKQEPQVEVNEDR. The segment covering 60-72 has biased composition (basic and acidic residues); the sequence is QKQEPQVEVNEDR.

This is an uncharacterized protein from Ostreid herpesvirus 1 (isolate France) (OsHV-1).